The sequence spans 212 residues: Thymidylate kinase (212 aa).

10–17 contributes to the ATP binding site; that stretch reads GIDGCGKT.

This sequence belongs to the thymidylate kinase family.

The catalysed reaction is dTMP + ATP = dTDP + ADP. In terms of biological role, phosphorylation of dTMP to form dTDP in both de novo and salvage pathways of dTTP synthesis. This chain is Thymidylate kinase, found in Synechococcus sp. (strain RCC307).